Reading from the N-terminus, the 131-residue chain is UPF0102 protein RPD_0400 (131 aa).

This sequence belongs to the UPF0102 family.

This chain is UPF0102 protein RPD_0400, found in Rhodopseudomonas palustris (strain BisB5).